The primary structure comprises 426 residues: Tryptophan synthase beta chain (426 aa).

At Lys-108 the chain carries N6-(pyridoxal phosphate)lysine.

This sequence belongs to the TrpB family. Tetramer of two alpha and two beta chains. Requires pyridoxal 5'-phosphate as cofactor.

It carries out the reaction (1S,2R)-1-C-(indol-3-yl)glycerol 3-phosphate + L-serine = D-glyceraldehyde 3-phosphate + L-tryptophan + H2O. It functions in the pathway amino-acid biosynthesis; L-tryptophan biosynthesis; L-tryptophan from chorismate: step 5/5. Its function is as follows. The beta subunit is responsible for the synthesis of L-tryptophan from indole and L-serine. The polypeptide is Tryptophan synthase beta chain (trpB) (Thermoplasma volcanium (strain ATCC 51530 / DSM 4299 / JCM 9571 / NBRC 15438 / GSS1)).